A 233-amino-acid polypeptide reads, in one-letter code: Phosphoglycolate phosphatase (233 aa).

The active-site Nucleophile is aspartate 13. The Mg(2+) site is built by aspartate 13, aspartate 15, and aspartate 175.

This sequence belongs to the HAD-like hydrolase superfamily. CbbY/CbbZ/Gph/YieH family. Requires Mg(2+) as cofactor.

The catalysed reaction is 2-phosphoglycolate + H2O = glycolate + phosphate. It functions in the pathway organic acid metabolism; glycolate biosynthesis; glycolate from 2-phosphoglycolate: step 1/1. In terms of biological role, specifically catalyzes the dephosphorylation of 2-phosphoglycolate. Is involved in the dissimilation of the intracellular 2-phosphoglycolate formed during the DNA repair of 3'-phosphoglycolate ends, a major class of DNA lesions induced by oxidative stress. The chain is Phosphoglycolate phosphatase from Agrobacterium fabrum (strain C58 / ATCC 33970) (Agrobacterium tumefaciens (strain C58)).